Consider the following 607-residue polypeptide: Dopamine receptor 3 (607 aa).

At 1 to 23 (MLAGQHHVTDIESPLMVVLWRVA) the chain is on the extracellular side. The helical transmembrane segment at 24–44 (AGVFLPLVPTMAVFGNVLVIM) threads the bilayer. The Cytoplasmic portion of the chain corresponds to 45 to 58 (SVFRERSLQTVTNM). The chain crosses the membrane as a helical span at residues 59–79 (LIVSLAVSDFMVAIGVMSFGV). The Extracellular segment spans residues 80-96 (YYEWNDFKWGLGSFFCH). A disulfide bridge links Cys-95 with Cys-173. The chain crosses the membrane as a helical span at residues 97-117 (VYQALDVACSTASILNLLAIS). At 118-141 (LDRYIAIGHPISYAQYGARGGRAM) the chain is on the cytoplasmic side. A helical membrane pass occupies residues 142 to 162 (ISITIVWGVSVAVALPLLLGV). Over 163-182 (NPMEENDLQECELANPYFNM) the chain is Extracellular. A helical membrane pass occupies residues 183–203 (ISSIFSFFIPCIAMIILYTII). Over 204–523 (FRRLRQRERA…TKQMRREHKA (320 aa)) the chain is Cytoplasmic. A disordered region spans residues 402–435 (VPSIQDEKKLSQKSNDLPFSHQNGTHKQKLLPNP). Positions 413-424 (QKSNDLPFSHQN) are enriched in polar residues. A helical membrane pass occupies residues 524 to 544 (TVTLAVVLAVFLFCWLPFFVL). The Extracellular portion of the chain corresponds to 545–558 (HLSNSICLIIDENS). Residues 559–579 (ACVGFLPLYLATWLGYLNSSL) traverse the membrane as a helical segment. At 580-607 (NPLIYTVFDQRFRNAFRNILSCGIFKKR) the chain is on the cytoplasmic side.

It belongs to the G-protein coupled receptor 1 family. In terms of tissue distribution, expressed in the neurons of the head, ventral cord and tail with weak expression observed in body wall muscles and PVD neurons. In the ventral cord, expressed strongly in GABAergic neurons with weaker expression in cholinergic motor neurons. Expressed in cholinergic SIA neurons and octopaminergic RIC neurons. In males, expressed in the dorsal and ventral spicule protractor and retractor muscles, and the sensory post-cloacal sensilla B (PCB) neuron. Expressed in the head acetylcholine neurons. Expressed in the AVA, AVB, AVD and AVE command interneurons. Expressed in premotor interneurons.

It is found in the cell membrane. G-protein coupled receptor which binds to the neurotransmitter dopamine with high affinity leading to the activation of an associated G-protein and downstream signaling pathways. Couples to G-proteins to inhibit adenylate cyclase (AC) activity and cAMP production. Antagonizes the D1-like dopamine receptor dop-1 to negatively regulate the rate of locomotion. Negatively regulates locomotion through the activation of goa-1 subunit proteins which inactivates the unc-77/nca-1 and nca-2 ion-channels in the command interneurons. Inhibits early-stage swimming by modulating the unc-77/nca-1 and nca-2 ion channels of premotor interneurons. In GABAergic, RIC, and SIA neurons, antagonizes the function of dop-1 to play a role in behavioral plasticity and regulate the decision-making process when conflicting alternatives are present. Antagonizes octopamine signaling in response to food by promoting the dopamine-mediated suppression of crh-1/CREB1 transcription factor activation in cholinergic SIA neurons. This is most likely in association with the G(o)-alpha G-protein subunit goa-1. Promotes male mating behavior by antagonizing acetylcholine signaling to control the protrusion of copulatory spicules from the tail of males during hermaphrodite vulval location. Under mitochondria stress, plays a role in bacterial preference, resulting in learned avoidance behavior. The sequence is that of Dopamine receptor 3 from Caenorhabditis elegans.